A 115-amino-acid polypeptide reads, in one-letter code: UPF0738 protein SH1953 (115 aa).

It belongs to the UPF0738 family.

This is UPF0738 protein SH1953 from Staphylococcus haemolyticus (strain JCSC1435).